The following is a 427-amino-acid chain: Glutamate-1-semialdehyde 2,1-aminomutase (427 aa).

At lysine 265 the chain carries N6-(pyridoxal phosphate)lysine.

It belongs to the class-III pyridoxal-phosphate-dependent aminotransferase family. HemL subfamily. In terms of assembly, homodimer. The cofactor is pyridoxal 5'-phosphate.

The protein localises to the cytoplasm. The enzyme catalyses (S)-4-amino-5-oxopentanoate = 5-aminolevulinate. It participates in porphyrin-containing compound metabolism; protoporphyrin-IX biosynthesis; 5-aminolevulinate from L-glutamyl-tRNA(Glu): step 2/2. This Burkholderia orbicola (strain MC0-3) protein is Glutamate-1-semialdehyde 2,1-aminomutase.